The primary structure comprises 499 residues: Putative alpha-galactosidase 8 (499 aa).

Asn154 and Asn191 each carry an N-linked (GlcNAc...) asparagine glycan. Asp238 serves as the catalytic Nucleophile. Residue Asn256 is glycosylated (N-linked (GlcNAc...) asparagine). Asp303 (proton donor) is an active-site residue.

Belongs to the glycosyl hydrolase 27 family.

The protein resides in the secreted. It catalyses the reaction Hydrolysis of terminal, non-reducing alpha-D-galactose residues in alpha-D-galactosides, including galactose oligosaccharides, galactomannans and galactolipids.. Its function is as follows. Putative alpha-galactosidase involved in the degradation of simple oligosaccharides like melibiose, raffinose and stachyose, and of polymeric galacto(gluco)mannans. The polypeptide is Putative alpha-galactosidase 8 (agl8) (Emericella nidulans (strain FGSC A4 / ATCC 38163 / CBS 112.46 / NRRL 194 / M139) (Aspergillus nidulans)).